A 444-amino-acid polypeptide reads, in one-letter code: MSNEEFIRTQIFGTVFEITNRYTNLNPVGMGAFGLVCSATDTLTSQPVAIKKIMKPFSTSVLAKRTYRELKLLKHLRHENLICLEDIFLSPLEDIYFVTELQGTDLHRLLQTRPLEKQFVQYFLYQILRGLKYVHSAGVIHRDLKPSNILINENCDLKICDFGLARIQDPQMTGYVSTRYYRAPEIMLTWQKYNVEVDIWSAGCIFAEMIEGKPLFPGKDHVHQFSIITDLLGSPPKDVIDTICSENTLKFVTSLPHRDPVPFSSRFQNLEPDAIDLLEKMLVFDPKKRITAADALAHPYLSPYHDPTDEPIAEAKFDWNFNDADLPVDTWRVMMYSEILDFHQIGDPQINTNATFDDQVAAATVAAAEAASKQQQQQQHQTEEQTQQTIASTPPQAQVTPQQLESGANSNSNSNPSFSIGPDPANETLTNFANQADQYVSKFK.

Residues 22–301 (YTNLNPVGMG…AADALAHPYL (280 aa)) form the Protein kinase domain. Residues 28-36 (VGMGAFGLV) and Lys51 each bind ATP. The Proton acceptor role is filled by Asp143. Thr173 is subject to Phosphothreonine. Positions 173–175 (TGY) match the TXY motif. Tyr175 is subject to Phosphotyrosine. A compositionally biased stretch (low complexity) spans 371-393 (ASKQQQQQQHQTEEQTQQTIAST). Positions 371–444 (ASKQQQQQQH…QADQYVSKFK (74 aa)) are disordered. Residues 394-405 (PPQAQVTPQQLE) are compositionally biased toward polar residues. Low complexity predominate over residues 406–419 (SGANSNSNSNPSFS). Positions 427-438 (ETLTNFANQADQ) are enriched in polar residues.

Belongs to the protein kinase superfamily. Ser/Thr protein kinase family. MAP kinase subfamily. HOG1 sub-subfamily. Requires Mg(2+) as cofactor. In terms of processing, dually phosphorylated on Thr-173 and Tyr-175, which activates the enzyme.

It is found in the cytoplasm. It localises to the nucleus. The catalysed reaction is L-seryl-[protein] + ATP = O-phospho-L-seryl-[protein] + ADP + H(+). The enzyme catalyses L-threonyl-[protein] + ATP = O-phospho-L-threonyl-[protein] + ADP + H(+). Activated by tyrosine and threonine phosphorylation. Its function is as follows. Proline-directed serine/threonine-protein kinase involved in a signal transduction pathway that is activated by changes in the osmolarity of the extracellular environment. Controls osmotic regulation of transcription of target genes. The protein is Mitogen-activated protein kinase HOG1 (HOG1) of Kluyveromyces lactis (strain ATCC 8585 / CBS 2359 / DSM 70799 / NBRC 1267 / NRRL Y-1140 / WM37) (Yeast).